The primary structure comprises 622 residues: MSLDISQFPVLAQANTPNELRQLPQALLPQVADELREFLLKSVGMSSGHFASGLGTVELTVALHYVYNTPFDRLIWDVGHQAYPHKILTGRRDKMHTIRQKNGLHPFPWREESEYDTFSVGHSGTSISAALAMAVAAEKEQAGRKVVAVIGDGAMTGGMVFEAMNHAGDLHNDMLVVLNDNEMSISENVGALNNHLAQLMSGRFYTTLREGGKKVLKGMPVIKEMAKRTEEHLKGMVVPGTLFEELGFNYIGPIDGHDVDALVETMRNMRNLKGPQVLHIMTKKGRGYEPAEKDPIGWHAVPKFDPTQFKKPSTTPGLPTFSQVFGKWLCDIAEQDDKVLGITPAMREGSGMVEFSQRFPKQYFDAAIAEQHAVTLGAGFACEGYKPVVAIYSTFLQRGYDQLIHDVALQRLPVLFAIDRGGIVGADGPTHQGAFDLSFMRCIPNMVIMAPSDENECRQMLYTGYCYNAGPSAVRYPRGSATGATQVEAMTALPIGKGVIKRVGKRIALLNFGTTLASALTAADNLDATVVDMRFVKPLDAELVTEMAQTHDILVTVEENAIMGGAGSGVLELLQKLKMPKPVLQIGLPDEFIKHGSPEEVTHDLQLDAEGILAQINAYLAQ.

Thiamine diphosphate contacts are provided by residues His-80 and 121 to 123; that span reads GHS. A Mg(2+)-binding site is contributed by Asp-152. Thiamine diphosphate is bound by residues 153–154, Asn-181, Tyr-288, and Glu-370; that span reads GA. Position 181 (Asn-181) interacts with Mg(2+).

It belongs to the transketolase family. DXPS subfamily. Homodimer. Requires Mg(2+) as cofactor. Thiamine diphosphate serves as cofactor.

The catalysed reaction is D-glyceraldehyde 3-phosphate + pyruvate + H(+) = 1-deoxy-D-xylulose 5-phosphate + CO2. It functions in the pathway metabolic intermediate biosynthesis; 1-deoxy-D-xylulose 5-phosphate biosynthesis; 1-deoxy-D-xylulose 5-phosphate from D-glyceraldehyde 3-phosphate and pyruvate: step 1/1. Functionally, catalyzes the acyloin condensation reaction between C atoms 2 and 3 of pyruvate and glyceraldehyde 3-phosphate to yield 1-deoxy-D-xylulose-5-phosphate (DXP). In Shewanella putrefaciens (strain CN-32 / ATCC BAA-453), this protein is 1-deoxy-D-xylulose-5-phosphate synthase.